A 621-amino-acid chain; its full sequence is Growth factor receptor-bound protein 10 (621 aa).

2 stretches are compositionally biased toward polar residues: residues 1-23 and 33-59; these read MNND…SDTD and HASN…QRSQ. The disordered stretch occupies residues 1–118; the sequence is MNNDINSSVE…PSQPPAKHCG (118 aa). Ser50 and Ser96 each carry phosphoserine. Residues 95–112 show a composition bias toward pro residues; it reads GSPPSVAPSSLPPPPSQP. In terms of domain architecture, Ras-associating spans 194 to 278; that stretch reads LRKDVKVFSE…SKFLFRKNYA (85 aa). A PH domain is found at 318-427; sequence CPEIQGFLQV…WMTAFRLLKY (110 aa). Ser455 carries the phosphoserine; by MTOR and PKB/AKT1 modification. Phosphoserine occurs at positions 458 and 503. The SH2 domain maps to 520 to 601; it reads WFHGRISREE…SDLIQLVDFY (82 aa).

This sequence belongs to the GRB7/10/14 family. As to quaternary structure, interacts with ligand-activated tyrosine kinase receptors, including FGFR1, INSR, IGF1R, MET and PDGFRB in a phosphotyrosine-dependent manner through the SH2 domain. Poorly binds to the EGFR. Directly interacts with MAP3K14/NIK and is recruited to the EGFR-ERBB2 complex. Interacts with GIGYF1/PERQ1 and GIGYF2/TNRC15. When unphosphorylated, interacts with AKT1 and when phosphorylated with YWHAE/14-3-3 epsilon. Interacts with NEDD4. Interacts with LRP6, thus interfering with the binding of AXIN1 to LRP6. Binds to activated NRAS. In terms of processing, phosphorylated on serine residues upon EGF, FGF and PDGF stimulation. In terms of tissue distribution, widely expressed.

It localises to the cytoplasm. With respect to regulation, phosphorylation by mTORC1 stabilizes and activates GRB10 constituting a feedback pathway by which mTORC1 inhibits INSR-dependent signaling. Adapter protein which modulates coupling of a number of cell surface receptor kinases with specific signaling pathways. Binds to, and suppress signals from, activated receptors tyrosine kinases, including the insulin (INSR) and insulin-like growth factor (IGF1R) receptors. The inhibitory effect can be achieved by 2 mechanisms: interference with the signaling pathway and increased receptor degradation. Delays and reduces AKT1 phosphorylation in response to insulin stimulation. Blocks association between INSR and IRS1 and IRS2 and prevents insulin-stimulated IRS1 and IRS2 tyrosine phosphorylation. Recruits NEDD4 to IGF1R, leading to IGF1R ubiquitination, increased internalization and degradation by both the proteasomal and lysosomal pathways. A similar role in the mediation of ubiquitination also has been suggested with INSR. Negatively regulates Wnt signaling by interacting with LRP6 intracellular portion and interfering with the binding of AXIN1 to LRP6. Positive regulator of the KDR/VEGFR-2 signaling pathway. May inhibit NEDD4-mediated degradation of KDR/VEGFR-2. The protein is Growth factor receptor-bound protein 10 (Grb10) of Mus musculus (Mouse).